The following is a 381-amino-acid chain: Alkanesulfonate monooxygenase (381 aa).

Belongs to the SsuD family. In terms of assembly, homotetramer.

The enzyme catalyses an alkanesulfonate + FMNH2 + O2 = an aldehyde + FMN + sulfite + H2O + 2 H(+). In terms of biological role, catalyzes the desulfonation of aliphatic sulfonates. This is Alkanesulfonate monooxygenase from Escherichia coli O7:K1 (strain IAI39 / ExPEC).